Reading from the N-terminus, the 449-residue chain is Integrator complex subunit 15 (449 aa).

The protein belongs to the Integrator subunit 15 family. Component of the Integrator complex, composed of core subunits INTS1, INTS2, INTS3, INTS4, INTS5, INTS6, INTS7, INTS8, INTS9/RC74, INTS10, INTS11/CPSF3L, INTS12, INTS13, INTS14 and INTS15. The core complex associates with protein phosphatase 2A subunits PPP2CA and PPP2R1A, to form the Integrator-PP2A (INTAC) complex. INTS15 is part of the tail subcomplex, composed of INTS10, INTS13, INTS14 and INTS15.

It is found in the nucleus. The protein localises to the chromosome. Functionally, component of the integrator complex, a multiprotein complex that terminates RNA polymerase II (Pol II) transcription in the promoter-proximal region of genes. The integrator complex provides a quality checkpoint during transcription elongation by driving premature transcription termination of transcripts that are unfavorably configured for transcriptional elongation: the complex terminates transcription by (1) catalyzing dephosphorylation of the C-terminal domain (CTD) of Pol II subunit POLR2A/RPB1 and SUPT5H/SPT5, (2) degrading the exiting nascent RNA transcript via endonuclease activity and (3) promoting the release of Pol II from bound DNA. The integrator complex is also involved in terminating the synthesis of non-coding Pol II transcripts, such as enhancer RNAs (eRNAs), small nuclear RNAs (snRNAs), telomerase RNAs and long non-coding RNAs (lncRNAs). INTS15 is part of the integrator tail module that acts as a platform for the recruitment of transcription factors at promoters. Within the integrator complex, INTS15 is required to bridge different integrator modules. In Homo sapiens (Human), this protein is Integrator complex subunit 15.